A 360-amino-acid polypeptide reads, in one-letter code: Serine/threonine transporter SstT (360 aa).

The next 9 helical transmembrane spans lie at 17–37, 40–60, 78–98, 138–158, 179–199, 212–232, 295–315, 316–336, and 339–359; these read IGIGVVLGVLLGLIAPKITVI, FGSLFVGALKAIAPLLVLTLV, VICLYLFGTFAAAFIAVGASY, ALATANYIGVLTWAAVFGLAF, VVGWIIGLAPFGIMGLVFDTI, LLLLLLVGSMIFVALVVNPLI, MAGAAITINILTMAAVHTLGI, SVDFSSALLLSVVASLSAAGA, and VAGGSLLLIPVACSLFVVPYV.

Belongs to the dicarboxylate/amino acid:cation symporter (DAACS) (TC 2.A.23) family.

The protein resides in the cell membrane. The enzyme catalyses L-serine(in) + Na(+)(in) = L-serine(out) + Na(+)(out). It catalyses the reaction L-threonine(in) + Na(+)(in) = L-threonine(out) + Na(+)(out). In terms of biological role, involved in the import of serine and threonine into the cell, with the concomitant import of sodium (symport system). The polypeptide is Serine/threonine transporter SstT (Streptococcus suis (strain 05ZYH33)).